Here is a 242-residue protein sequence, read N- to C-terminus: Phosphoribosylaminoimidazole-succinocarboxamide synthase (242 aa).

This sequence belongs to the SAICAR synthetase family.

The enzyme catalyses 5-amino-1-(5-phospho-D-ribosyl)imidazole-4-carboxylate + L-aspartate + ATP = (2S)-2-[5-amino-1-(5-phospho-beta-D-ribosyl)imidazole-4-carboxamido]succinate + ADP + phosphate + 2 H(+). The protein operates within purine metabolism; IMP biosynthesis via de novo pathway; 5-amino-1-(5-phospho-D-ribosyl)imidazole-4-carboxamide from 5-amino-1-(5-phospho-D-ribosyl)imidazole-4-carboxylate: step 1/2. In Prochlorococcus marinus subsp. pastoris (strain CCMP1986 / NIES-2087 / MED4), this protein is Phosphoribosylaminoimidazole-succinocarboxamide synthase.